Reading from the N-terminus, the 340-residue chain is Entry-fusion complex protein OPG094 (340 aa).

Residues 1-20 (MGGGVSVELPKRDPPPGVPT) form a disordered region. G2 is lipidated: N-myristoyl glycine; by host. The Virion surface portion of the chain corresponds to 2 to 319 (GGGVSVELPK…VQHNIKHSFD (318 aa)). A helical; Signal-anchor for type II membrane protein membrane pass occupies residues 320–340 (LKLHLISLLSLLVIWILIVAI).

Belongs to the orthopoxvirus OPG086 family. As to quaternary structure, interacts with OPG143. Component of the entry fusion complex (EFC) composed of OPG053, OPG076, OPG086, OPG094, OPG095, OPG099, OPG107, OPG143, OPG104, OPG147 and OPG155. Except for OPG095 and OPG053, each of the EFC proteins is required for assembly or stability of the complex. In terms of processing, unglycosylated because produced in viral factories instead of the classic ER -Golgi route.

The protein resides in the virion membrane. Its function is as follows. Component of the entry fusion complex (EFC), which consists of 11 proteins. During cell infection, this complex mediates entry of the virion core into the host cytoplasm by a two-step mechanism consisting of lipid mixing of the viral and cellular membranes and subsequent pore formation. The polypeptide is Entry-fusion complex protein OPG094 (OPG094) (Vaccinia virus (strain Copenhagen) (VACV)).